Reading from the N-terminus, the 276-residue chain is MIKPKIALTIAGTDPTGGAGVMADLKSFHSCGVYGMGVVTSIVAQNTLGVQHIHNLNHQWVDEQLDSVFNDTLPHAIKTGMIATADTMETIRHYLMQHESIPYVIDPVMLAKSGDSLMDNNTKQNLQHTLLPLADVVTPNLPEAEEITGLTIDSEEKIMQAGRIFINEIGSKGVIIKGGHSNDADIAKDYLFTKEGVQTFENERFKTKHTHGTGCTFSAVITAELAKGRPLFEAVHKAKKFISMSIQYTPEIGRGRGPVNHFAYLKKEGLDDELSK.

Residue Q45 coordinates 4-amino-5-hydroxymethyl-2-methylpyrimidine.

This sequence belongs to the ThiD family.

The enzyme catalyses 4-amino-5-hydroxymethyl-2-methylpyrimidine + ATP = 4-amino-2-methyl-5-(phosphooxymethyl)pyrimidine + ADP + H(+). It carries out the reaction 4-amino-2-methyl-5-(phosphooxymethyl)pyrimidine + ATP = 4-amino-2-methyl-5-(diphosphooxymethyl)pyrimidine + ADP. It participates in cofactor biosynthesis; thiamine diphosphate biosynthesis; 4-amino-2-methyl-5-diphosphomethylpyrimidine from 5-amino-1-(5-phospho-D-ribosyl)imidazole: step 2/3. It functions in the pathway cofactor biosynthesis; thiamine diphosphate biosynthesis; 4-amino-2-methyl-5-diphosphomethylpyrimidine from 5-amino-1-(5-phospho-D-ribosyl)imidazole: step 3/3. Catalyzes the phosphorylation of hydroxymethylpyrimidine phosphate (HMP-P) to HMP-PP, and of HMP to HMP-P. The polypeptide is Hydroxymethylpyrimidine/phosphomethylpyrimidine kinase (thiD) (Staphylococcus aureus (strain MRSA252)).